A 371-amino-acid polypeptide reads, in one-letter code: Pyruvate dehydrogenase E1 component subunit alpha (371 aa).

As to quaternary structure, heterodimer of an alpha and a beta chain. The cofactor is thiamine diphosphate.

The enzyme catalyses N(6)-[(R)-lipoyl]-L-lysyl-[protein] + pyruvate + H(+) = N(6)-[(R)-S(8)-acetyldihydrolipoyl]-L-lysyl-[protein] + CO2. Functionally, the pyruvate dehydrogenase complex catalyzes the overall conversion of pyruvate to acetyl-CoA and CO(2). It contains multiple copies of three enzymatic components: pyruvate dehydrogenase (E1), dihydrolipoamide acetyltransferase (E2) and lipoamide dehydrogenase (E3). The protein is Pyruvate dehydrogenase E1 component subunit alpha of Bacillus cereus.